Here is a 233-residue protein sequence, read N- to C-terminus: Ribonuclease 3 (233 aa).

Positions 4-126 constitute an RNase III domain; it reads LNKLMERLGH…IVGSIYIDAG (123 aa). Glutamate 39 contacts Mg(2+). Aspartate 43 is a catalytic residue. Residues aspartate 112 and glutamate 115 each contribute to the Mg(2+) site. Glutamate 115 is a catalytic residue. The region spanning 153 to 222 is the DRBM domain; that stretch reads DAKSLLQEWL…AKRFLELLDD (70 aa).

Belongs to the ribonuclease III family. Homodimer. The cofactor is Mg(2+).

Its subcellular location is the cytoplasm. The enzyme catalyses Endonucleolytic cleavage to 5'-phosphomonoester.. In terms of biological role, digests double-stranded RNA. Involved in the processing of primary rRNA transcript to yield the immediate precursors to the large and small rRNAs (23S and 16S). Processes some mRNAs, and tRNAs when they are encoded in the rRNA operon. Processes pre-crRNA and tracrRNA of type II CRISPR loci if present in the organism. In Coxiella burnetii (strain CbuG_Q212) (Coxiella burnetii (strain Q212)), this protein is Ribonuclease 3.